A 208-amino-acid chain; its full sequence is MSAQKRVFLKVVILGDSGVGKTCLMNQFVNQKFSREYKATIGADFLTKDVVVDDKLVTLQLWDTAGQERFQSLGMAFYRGADCCVIVYNVNNSKSFDSVENWRQEFLYQTSQDECAFPFIIVGNQIDKDASKRAVSLHRALDYCKSKHGSNMIHFEASAKENTNVTDLFETVSRLALENESSRDDFVNDFSEPLLLSKPLNNTSSCNC.

GTP contacts are provided by residues 17-23, 33-40, Gly-66, 124-127, and 158-160; these read SGVGKTC, FSREYKAT, NQID, and SAK. The Effector region motif lies at 37–45; that stretch reads YKATIGADF. S-geranylgeranyl cysteine attachment occurs at residues Cys-206 and Cys-208. Cys-208 carries the cysteine methyl ester modification.

Belongs to the small GTPase superfamily. Rab family.

The protein resides in the vacuole membrane. Its activity is regulated as follows. Rab activation is generally mediated by a guanine exchange factor (GEF), while inactivation through hydrolysis of bound GTP is catalyzed by a GTPase activating protein (GAP). In terms of biological role, ypt/Rab-type GTPases are key regulators of membrane trafficking and intracellular vesicular transport. They act as molecular switches that convert between GTP-bound and GDP-bound states, and regulate virtually all steps of membrane traffic from the formation of the transport vesicle at the donor membrane to its fusion at the target membrane. In the GDP-bound state, Ypt proteins are predominantly cytosolic, solubilized through the interaction with a GDP dissociation inhibitor (GDI). In the GTP-bound state, the proteins are membrane bound and interact with specific effector proteins that select cargo, promote vesicle movement, or verify the correct site of fusion. Act antagonistically to ypt7 in regulating vacuolar morphology, promoting vacuolar fission. In Schizosaccharomyces pombe (strain 972 / ATCC 24843) (Fission yeast), this protein is Ypt/Rab-type GTPase ypt71 (ypt71).